A 268-amino-acid polypeptide reads, in one-letter code: Shikimate dehydrogenase (NADP(+)) (268 aa).

Residues 13–15 (SLS) and threonine 60 each bind shikimate. Lysine 64 functions as the Proton acceptor in the catalytic mechanism. Glutamate 76 contacts NADP(+). Residues asparagine 85 and aspartate 100 each coordinate shikimate. Residues 124 to 128 (GAGGA), 148 to 153 (NRTMAR), and isoleucine 209 contribute to the NADP(+) site. Residue tyrosine 211 participates in shikimate binding. Glycine 232 provides a ligand contact to NADP(+).

This sequence belongs to the shikimate dehydrogenase family. As to quaternary structure, homodimer.

It carries out the reaction shikimate + NADP(+) = 3-dehydroshikimate + NADPH + H(+). It participates in metabolic intermediate biosynthesis; chorismate biosynthesis; chorismate from D-erythrose 4-phosphate and phosphoenolpyruvate: step 4/7. Its function is as follows. Involved in the biosynthesis of the chorismate, which leads to the biosynthesis of aromatic amino acids. Catalyzes the reversible NADPH linked reduction of 3-dehydroshikimate (DHSA) to yield shikimate (SA). The sequence is that of Shikimate dehydrogenase (NADP(+)) from Staphylococcus aureus (strain bovine RF122 / ET3-1).